A 66-amino-acid polypeptide reads, in one-letter code: U10-theraphotoxin-Cg1a 3 (66 aa).

Positions 1-21 are cleaved as a signal peptide; sequence MKTSVLFVIFGLALLFCLSFA. The propeptide occupies 22–29; the sequence is DELEDTGR. 3 disulfides stabilise this stretch: cysteine 31/cysteine 46, cysteine 38/cysteine 51, and cysteine 45/cysteine 58.

It belongs to the neurotoxin 10 (Hwtx-1) family. 29 (Jztx-13) subfamily. As to expression, expressed by the venom gland.

The protein resides in the secreted. In terms of biological role, probable ion channel inhibitor. The sequence is that of U10-theraphotoxin-Cg1a 3 from Chilobrachys guangxiensis (Chinese earth tiger tarantula).